Here is a 452-residue protein sequence, read N- to C-terminus: cAMP/cGMP-dependent 3',5'-cAMP/cGMP phosphodiesterase A (452 aa).

The N-terminal stretch at 1-23 is a signal peptide; sequence MALNKKLISLLLLIFIILNIVNS. Residues 24 to 49 constitute a propeptide that is removed on maturation; that stretch reads HQQEDCDDDDEDIGISAERSERRSVK. N-linked (GlcNAc...) asparagine glycosylation is found at Asn-101, Asn-141, and Asn-277.

Belongs to the cyclic nucleotide phosphodiesterase class-II family.

Its subcellular location is the secreted. It is found in the extracellular space. It localises to the cell surface. The enzyme catalyses 3',5'-cyclic AMP + H2O = AMP + H(+). The catalysed reaction is 3',5'-cyclic GMP + H2O = GMP + H(+). With respect to regulation, inhibited by dithiotreitol (DTT). In terms of biological role, phosphodiesterase which displays a preference for cAMP over cGMP. Involved in the degradation of extracellular cAMP. Maintains the responsiveness of cells to the chemoattractant cAMP during the aggregation phase of development. The protein is cAMP/cGMP-dependent 3',5'-cAMP/cGMP phosphodiesterase A (pdsA) of Dictyostelium discoideum (Social amoeba).